Reading from the N-terminus, the 193-residue chain is Xanthine phosphoribosyltransferase (193 aa).

Residues Leu20 and Thr27 each coordinate xanthine. 5-phospho-alpha-D-ribose 1-diphosphate is bound at residue 128 to 132; the sequence is ANGQA. Lys156 is a binding site for xanthine.

It belongs to the purine/pyrimidine phosphoribosyltransferase family. Xpt subfamily. As to quaternary structure, homodimer.

It localises to the cytoplasm. It carries out the reaction XMP + diphosphate = xanthine + 5-phospho-alpha-D-ribose 1-diphosphate. The protein operates within purine metabolism; XMP biosynthesis via salvage pathway; XMP from xanthine: step 1/1. Functionally, converts the preformed base xanthine, a product of nucleic acid breakdown, to xanthosine 5'-monophosphate (XMP), so it can be reused for RNA or DNA synthesis. The polypeptide is Xanthine phosphoribosyltransferase (Streptococcus pneumoniae serotype 2 (strain D39 / NCTC 7466)).